Consider the following 407-residue polypeptide: Aurora kinase A-A (407 aa).

Positions 1 to 10 (MERAVKENHK) are enriched in basic and acidic residues. The disordered stretch occupies residues 1–130 (MERAVKENHK…KTSAVPKEEG (130 aa)). Composition is skewed to polar residues over residues 67–77 (ILSSQKPTTQI) and 84–110 (QGHQ…STPN). Residues 140–390 (FEIGRPLGKG…LKGVLEHPWI (251 aa)) form the Protein kinase domain. ATP is bound by residues K150, K169, and 217–220 (LDYA). The Proton acceptor role is filled by D263. D281 lines the ATP pocket. Positions 287 to 300 (HAPSSRRTTLCGTL) are activation segment.

The protein belongs to the protein kinase superfamily. Ser/Thr protein kinase family. Aurora subfamily. Interacts with kif2c and kif11. Phosphorylated. Autophosphorylated on a serine residue. Highly expressed in ovary and testis.

The protein localises to the cytoplasm. It localises to the cytoskeleton. Its subcellular location is the spindle. The protein resides in the microtubule organizing center. It is found in the centrosome. It carries out the reaction L-seryl-[protein] + ATP = O-phospho-L-seryl-[protein] + ADP + H(+). The enzyme catalyses L-threonyl-[protein] + ATP = O-phospho-L-threonyl-[protein] + ADP + H(+). In terms of biological role, mitotic serine/threonine kinases that contributes to the regulation of cell cycle progression. Associates with the centrosome and the spindle microtubules during mitosis and plays a critical role in various mitotic events including the establishment of mitotic spindle, centrosome duplication, centrosome separation as well as maturation, chromosomal alignment, spindle assembly checkpoint, and cytokinesis. Phosphorylates numerous target proteins. Important for microtubule formation and/or stabilization. The polypeptide is Aurora kinase A-A (aurka-a) (Xenopus laevis (African clawed frog)).